Here is a 596-residue protein sequence, read N- to C-terminus: Beta-glucuronidase (596 aa).

D-glucuronate-binding residues include aspartate 168 and asparagine 412. Glutamate 413 functions as the Proton donor in the catalytic mechanism. Residues asparagine 464, tyrosine 470, glutamate 502, tryptophan 547, and lysine 566 each coordinate D-glucuronate. Glutamate 502 serves as the catalytic Nucleophile. Residues 564-566 carry the N-K motif motif; the sequence is NKK.

This sequence belongs to the glycosyl hydrolase 2 family.

The protein resides in the cytoplasm. The catalysed reaction is a beta-D-glucuronoside + H2O = D-glucuronate + an alcohol. Functionally, displays beta-glucuronidase activity with the artificial substrate p-nitrophenyl-beta-D-glucuronide (PNPG). Is probably involved in the metabolism of oligosaccharides containing the 3-O-beta-D-glucopyranosyl-beta-D-glucuronide structure released from bacterial and plant acidic carbohydrates. The chain is Beta-glucuronidase from Paenibacillus borealis.